The primary structure comprises 180 residues: UPF0227 protein YcfP (180 aa).

It belongs to the UPF0227 family.

This Escherichia coli O7:K1 (strain IAI39 / ExPEC) protein is UPF0227 protein YcfP.